The primary structure comprises 169 residues: Allophycocyanin subunit beta-18 (169 aa).

Asn-72 bears the N4-methylasparagine mark. (2R,3E)-phycocyanobilin is bound at residue Cys-82.

This sequence belongs to the phycobiliprotein family. Heterodimer of an alpha and a beta chain. Contains one covalently linked bilin chromophore.

It localises to the plastid. It is found in the chloroplast thylakoid membrane. Light-harvesting photosynthetic bile pigment-protein from the phycobiliprotein complex. Allophycocyanin has a maximum absorption at approximately 650 nanometers. This is Allophycocyanin subunit beta-18 (apcF) from Porphyra purpurea (Red seaweed).